A 207-amino-acid polypeptide reads, in one-letter code: 2,3-bisphosphoglycerate-dependent phosphoglycerate mutase (207 aa).

Substrate is bound by residues 10-17 (RHGQSEWN), 23-24 (TG), Arg-62, 89-92 (ERDY), Lys-100, 116-117 (RR), and 160-161 (GN). His-11 (tele-phosphohistidine intermediate) is an active-site residue. The Proton donor/acceptor role is filled by Glu-89.

This sequence belongs to the phosphoglycerate mutase family. BPG-dependent PGAM subfamily. Homodimer.

It carries out the reaction (2R)-2-phosphoglycerate = (2R)-3-phosphoglycerate. The protein operates within carbohydrate degradation; glycolysis; pyruvate from D-glyceraldehyde 3-phosphate: step 3/5. In terms of biological role, catalyzes the interconversion of 2-phosphoglycerate and 3-phosphoglycerate. In Bradyrhizobium sp. (strain BTAi1 / ATCC BAA-1182), this protein is 2,3-bisphosphoglycerate-dependent phosphoglycerate mutase.